The chain runs to 166 residues: Shikimate kinase (166 aa).

Residue 11–16 (GSGKST) coordinates ATP. Mg(2+) is bound at residue serine 15. Substrate-binding residues include aspartate 33, arginine 57, and glycine 79. Arginine 117 contacts ATP. Arginine 134 lines the substrate pocket.

It belongs to the shikimate kinase family. Monomer. Mg(2+) serves as cofactor.

It is found in the cytoplasm. The enzyme catalyses shikimate + ATP = 3-phosphoshikimate + ADP + H(+). Its pathway is metabolic intermediate biosynthesis; chorismate biosynthesis; chorismate from D-erythrose 4-phosphate and phosphoenolpyruvate: step 5/7. Catalyzes the specific phosphorylation of the 3-hydroxyl group of shikimic acid using ATP as a cosubstrate. The polypeptide is Shikimate kinase (Sulfurihydrogenibium sp. (strain YO3AOP1)).